The primary structure comprises 339 residues: Ribosomal RNA small subunit methyltransferase C (339 aa).

Belongs to the methyltransferase superfamily. RsmC family. As to quaternary structure, monomer.

It localises to the cytoplasm. It carries out the reaction guanosine(1207) in 16S rRNA + S-adenosyl-L-methionine = N(2)-methylguanosine(1207) in 16S rRNA + S-adenosyl-L-homocysteine + H(+). Its function is as follows. Specifically methylates the guanine in position 1207 of 16S rRNA in the 30S particle. This Photobacterium profundum (strain SS9) protein is Ribosomal RNA small subunit methyltransferase C.